A 146-amino-acid polypeptide reads, in one-letter code: uncharacterized protein (146 aa).

The next 5 membrane-spanning stretches (helical) occupy residues 5 to 27 (GAMV…YGLA), 32 to 49 (FVYV…YIIL), 61 to 80 (LAVM…FFSG), 90 to 108 (SLGL…ARVF), and 120 to 142 (FFLK…MLFL).

Its subcellular location is the cell membrane. This is an uncharacterized protein from Archaeoglobus fulgidus (strain ATCC 49558 / DSM 4304 / JCM 9628 / NBRC 100126 / VC-16).